The following is a 348-amino-acid chain: Papaya proteinase 4 (348 aa).

Positions 1 to 18 are cleaved as a signal peptide; the sequence is MAIICSFSKLLFVAICLF. A propeptide spans 19–132 (activation peptide); the sequence is GHMSLSYCDF…EEFVNEDIVD (114 aa). Disulfide bonds link cysteine 154/cysteine 195, cysteine 188/cysteine 227, and cysteine 285/cysteine 336. Cysteine 157 is an active-site residue. Catalysis depends on residues histidine 291 and asparagine 311.

The protein belongs to the peptidase C1 family.

The enzyme catalyses Preferential cleavage: Gly-|-Xaa, in proteins and in small molecule substrates.. Its activity is regulated as follows. Not inhibited by cystatin. Functionally, thiol protease with a substrate specificity very different from the other thiol proteases. In Carica papaya (Papaya), this protein is Papaya proteinase 4.